The following is a 140-amino-acid chain: Acyl-coenzyme A thioesterase 13 (140 aa).

The residue at position 1 (Met-1) is an N-acetylmethionine. Residue Thr-2 is modified to N-acetylthreonine; in Acyl-coenzyme A thioesterase 13, N-terminally processed. 3 positions are modified to N6-acetyllysine: Lys-27, Lys-37, and Lys-43. Position 46 (Glu-46) interacts with CoA. Residues Asn-50 and Gly-81 each coordinate substrate. CoA contacts are provided by residues Ser-83, 90–95, and 108–113; these read YMSPAK and KQGKTL. Residues Lys-108 and Lys-127 each carry the N6-acetyllysine modification. His-137 lines the CoA pocket.

It belongs to the thioesterase PaaI family. In terms of assembly, homotetramer. Interacts with PCTP.

The protein localises to the cytoplasm. Its subcellular location is the cytosol. It localises to the mitochondrion. The protein resides in the nucleus. It is found in the cytoskeleton. The protein localises to the spindle. It catalyses the reaction a fatty acyl-CoA + H2O = a fatty acid + CoA + H(+). The catalysed reaction is decanoyl-CoA + H2O = decanoate + CoA + H(+). The enzyme catalyses octanoyl-CoA + H2O = octanoate + CoA + H(+). It carries out the reaction butanoyl-CoA + H2O = butanoate + CoA + H(+). It catalyses the reaction hexanoyl-CoA + H2O = hexanoate + CoA + H(+). The catalysed reaction is tetradecanoyl-CoA + H2O = tetradecanoate + CoA + H(+). The enzyme catalyses hexadecanoyl-CoA + H2O = hexadecanoate + CoA + H(+). It carries out the reaction dodecanoyl-CoA + H2O = dodecanoate + CoA + H(+). It catalyses the reaction (9Z)-octadecenoyl-CoA + H2O = (9Z)-octadecenoate + CoA + H(+). The catalysed reaction is (5Z,8Z,11Z,14Z)-eicosatetraenoyl-CoA + H2O = (5Z,8Z,11Z,14Z)-eicosatetraenoate + CoA + H(+). In terms of biological role, catalyzes the hydrolysis of acyl-CoAs into free fatty acids and coenzyme A (CoASH), regulating their respective intracellular levels. Has acyl-CoA thioesterase activity towards medium (C12) and long-chain (C18) fatty acyl-CoA substrates. Can also hydrolyze 3-hydroxyphenylacetyl-CoA and 3,4-dihydroxyphenylacetyl-CoA (in vitro). May play a role in controlling adaptive thermogenesis. In Homo sapiens (Human), this protein is Acyl-coenzyme A thioesterase 13.